The chain runs to 151 residues: Large ribosomal subunit protein bL9 (151 aa).

This sequence belongs to the bacterial ribosomal protein bL9 family.

Its function is as follows. Binds to the 23S rRNA. This Pseudothermotoga lettingae (strain ATCC BAA-301 / DSM 14385 / NBRC 107922 / TMO) (Thermotoga lettingae) protein is Large ribosomal subunit protein bL9.